A 373-amino-acid chain; its full sequence is Flagellar P-ring protein 1 (373 aa).

An N-terminal signal peptide occupies residues 1–24 (MRGISRLYWSLVLICFAFAPIVEA).

It belongs to the FlgI family. In terms of assembly, the basal body constitutes a major portion of the flagellar organelle and consists of four rings (L,P,S, and M) mounted on a central rod.

The protein resides in the periplasm. The protein localises to the bacterial flagellum basal body. Assembles around the rod to form the L-ring and probably protects the motor/basal body from shearing forces during rotation. The protein is Flagellar P-ring protein 1 of Hahella chejuensis (strain KCTC 2396).